The chain runs to 390 residues: Isoaspartyl dipeptidase (390 aa).

Residues H68 and H70 each contribute to the Zn(2+) site. Substrate contacts are provided by residues 75-77 (GGE), T106, and Y137. K162 provides a ligand contact to Zn(2+). K162 bears the N6-carboxylysine mark. A substrate-binding site is contributed by R169. The Zn(2+) site is built by H201 and H230. R233 provides a ligand contact to substrate. D285 serves as a coordination point for Zn(2+). D285 serves as the catalytic Proton acceptor. Residue S289 coordinates substrate.

Belongs to the peptidase M38 family. Requires Zn(2+) as cofactor. Co(2+) is required as a cofactor. Carboxylation allows a single lysine to coordinate two zinc ions.

It is found in the cytoplasm. Its activity is regulated as follows. P-hydroxymercuribenzoate causes a slight inhibition (8 to 17 %). Iodoacetamide, o-iodosobenzoate and ammonium persulfate do not inhibit the enzyme activity. Functionally, catalyzes the hydrolytic cleavage of a subset of L-isoaspartyl (L-beta-aspartyl) dipeptides. Used to degrade proteins damaged by L-isoaspartyl residues formation. The best substrate for the enzyme reported thus far is iso-Asp-Leu. In Escherichia coli (strain K12), this protein is Isoaspartyl dipeptidase (iadA).